The chain runs to 103 residues: UPF0122 protein FN1394 (103 aa).

Belongs to the UPF0122 family.

Its function is as follows. Might take part in the signal recognition particle (SRP) pathway. This is inferred from the conservation of its genetic proximity to ftsY/ffh. May be a regulatory protein. In Fusobacterium nucleatum subsp. nucleatum (strain ATCC 25586 / DSM 15643 / BCRC 10681 / CIP 101130 / JCM 8532 / KCTC 2640 / LMG 13131 / VPI 4355), this protein is UPF0122 protein FN1394.